A 791-amino-acid polypeptide reads, in one-letter code: DNA repair and recombination protein RAD54-like (791 aa).

A compositionally biased stretch (polar residues) spans 1 to 20; that stretch reads MRRSLAPSQRIGQSTASRNA. Positions 1–53 are disordered; sequence MRRSLAPSQRIGQSTASRNAFTPPLLQKKNKRACQKDLRLDTDADEDKERKRF. Residues 2 to 9 are required for chromatin remodeling, strand pairing activities and coupling of ATPase activity; sequence RRSLAPSQ. Phosphothreonine is present on T22. Residues 34–53 show a composition bias toward basic and acidic residues; the sequence is CQKDLRLDTDADEDKERKRF. Residues 175 to 349 enclose the Helicase ATP-binding domain; sequence EGKKGDFNGC…FSLVNFVNPE (175 aa). Position 188-195 (188-195) interacts with ATP; that stretch reads DEMGLGKT. Residues 300–303 carry the DEGH box motif; sequence DEGH. Residues 506 to 663 form the Helicase C-terminal domain; the sequence is LLDFMLAAIR…NNESSEKHFT (158 aa). A disordered region spans residues 747–791; the sequence is KEVVESPESAAAEAESVEEESQPTQRKRPSPPLSDDSADEDFIGF. Positions 782–791 are enriched in acidic residues; it reads DSADEDFIGF.

This sequence belongs to the SNF2/RAD54 helicase family. As to quaternary structure, interacts (via N-terminus) with spn-A/Rad51.

It is found in the nucleus. Its function is as follows. Involved in mitotic DNA repair and meiotic recombination. Functions in the recombinational DNA repair pathway. Essential for interhomolog gene conversion (GC), but may have a less important role in intersister GC than spn-A/Rad51. In the presence of DNA, spn-A/Rad51 enhances the ATPase activity of okr/Rad54. This is DNA repair and recombination protein RAD54-like from Drosophila ananassae (Fruit fly).